Reading from the N-terminus, the 302-residue chain is UDP-N-acetylenolpyruvoylglucosamine reductase (302 aa).

The FAD-binding PCMH-type domain occupies 23–188 (KVGGNAEIFF…LKAVFKVNKG (166 aa)). Arg168 is an active-site residue. Residue Ser217 is the Proton donor of the active site. Glu287 is a catalytic residue.

It belongs to the MurB family. FAD is required as a cofactor.

The protein resides in the cytoplasm. The enzyme catalyses UDP-N-acetyl-alpha-D-muramate + NADP(+) = UDP-N-acetyl-3-O-(1-carboxyvinyl)-alpha-D-glucosamine + NADPH + H(+). The protein operates within cell wall biogenesis; peptidoglycan biosynthesis. Cell wall formation. The polypeptide is UDP-N-acetylenolpyruvoylglucosamine reductase (Rickettsia bellii (strain RML369-C)).